Consider the following 472-residue polypeptide: ATP synthase subunit beta (472 aa).

157–164 contacts ATP; the sequence is GGAGVGKT.

This sequence belongs to the ATPase alpha/beta chains family. In terms of assembly, F-type ATPases have 2 components, CF(1) - the catalytic core - and CF(0) - the membrane proton channel. CF(1) has five subunits: alpha(3), beta(3), gamma(1), delta(1), epsilon(1). CF(0) has three main subunits: a(1), b(2) and c(9-12). The alpha and beta chains form an alternating ring which encloses part of the gamma chain. CF(1) is attached to CF(0) by a central stalk formed by the gamma and epsilon chains, while a peripheral stalk is formed by the delta and b chains.

It localises to the cell membrane. It catalyses the reaction ATP + H2O + 4 H(+)(in) = ADP + phosphate + 5 H(+)(out). Produces ATP from ADP in the presence of a proton gradient across the membrane. The catalytic sites are hosted primarily by the beta subunits. The sequence is that of ATP synthase subunit beta from Desulforamulus reducens (strain ATCC BAA-1160 / DSM 100696 / MI-1) (Desulfotomaculum reducens).